The chain runs to 345 residues: Methionine import ATP-binding protein MetN (345 aa).

One can recognise an ABC transporter domain in the interval isoleucine 2–isoleucine 241. Position 38–45 (glycine 38–serine 45) interacts with ATP.

It belongs to the ABC transporter superfamily. Methionine importer (TC 3.A.1.24) family. In terms of assembly, the complex is composed of two ATP-binding proteins (MetN), two transmembrane proteins (MetI) and a solute-binding protein (MetQ).

Its subcellular location is the cell inner membrane. The enzyme catalyses L-methionine(out) + ATP + H2O = L-methionine(in) + ADP + phosphate + H(+). It carries out the reaction D-methionine(out) + ATP + H2O = D-methionine(in) + ADP + phosphate + H(+). Its function is as follows. Part of the ABC transporter complex MetNIQ involved in methionine import. Responsible for energy coupling to the transport system. The polypeptide is Methionine import ATP-binding protein MetN (Mannheimia succiniciproducens (strain KCTC 0769BP / MBEL55E)).